The primary structure comprises 111 residues: Phosphoribosyl-ATP pyrophosphatase (111 aa).

The protein belongs to the PRA-PH family.

Its subcellular location is the cytoplasm. The catalysed reaction is 1-(5-phospho-beta-D-ribosyl)-ATP + H2O = 1-(5-phospho-beta-D-ribosyl)-5'-AMP + diphosphate + H(+). It functions in the pathway amino-acid biosynthesis; L-histidine biosynthesis; L-histidine from 5-phospho-alpha-D-ribose 1-diphosphate: step 2/9. This Pseudomonas entomophila (strain L48) protein is Phosphoribosyl-ATP pyrophosphatase.